Reading from the N-terminus, the 284-residue chain is ATP phosphoribosyltransferase (284 aa).

It belongs to the ATP phosphoribosyltransferase family. Long subfamily. The cofactor is Mg(2+).

It localises to the cytoplasm. It catalyses the reaction 1-(5-phospho-beta-D-ribosyl)-ATP + diphosphate = 5-phospho-alpha-D-ribose 1-diphosphate + ATP. Its pathway is amino-acid biosynthesis; L-histidine biosynthesis; L-histidine from 5-phospho-alpha-D-ribose 1-diphosphate: step 1/9. Feedback inhibited by histidine. Catalyzes the condensation of ATP and 5-phosphoribose 1-diphosphate to form N'-(5'-phosphoribosyl)-ATP (PR-ATP). Has a crucial role in the pathway because the rate of histidine biosynthesis seems to be controlled primarily by regulation of HisG enzymatic activity. The polypeptide is ATP phosphoribosyltransferase (Corynebacterium kroppenstedtii (strain DSM 44385 / JCM 11950 / CIP 105744 / CCUG 35717)).